The chain runs to 365 residues: Aminomethyltransferase (365 aa).

Belongs to the GcvT family. As to quaternary structure, the glycine cleavage system is composed of four proteins: P, T, L and H.

It catalyses the reaction N(6)-[(R)-S(8)-aminomethyldihydrolipoyl]-L-lysyl-[protein] + (6S)-5,6,7,8-tetrahydrofolate = N(6)-[(R)-dihydrolipoyl]-L-lysyl-[protein] + (6R)-5,10-methylene-5,6,7,8-tetrahydrofolate + NH4(+). In terms of biological role, the glycine cleavage system catalyzes the degradation of glycine. The sequence is that of Aminomethyltransferase from Yersinia enterocolitica serotype O:8 / biotype 1B (strain NCTC 13174 / 8081).